The chain runs to 101 residues: Phosphoribosyl-AMP cyclohydrolase (101 aa).

Mg(2+) is bound at residue Asp-71. Cys-72 contacts Zn(2+). Mg(2+) is bound by residues Asp-73 and Asp-75. The Zn(2+) site is built by Cys-88 and Cys-95.

Belongs to the PRA-CH family. In terms of assembly, homodimer. Requires Mg(2+) as cofactor. Zn(2+) is required as a cofactor.

It is found in the cytoplasm. The enzyme catalyses 1-(5-phospho-beta-D-ribosyl)-5'-AMP + H2O = 1-(5-phospho-beta-D-ribosyl)-5-[(5-phospho-beta-D-ribosylamino)methylideneamino]imidazole-4-carboxamide. The protein operates within amino-acid biosynthesis; L-histidine biosynthesis; L-histidine from 5-phospho-alpha-D-ribose 1-diphosphate: step 3/9. Functionally, catalyzes the hydrolysis of the adenine ring of phosphoribosyl-AMP. The polypeptide is Phosphoribosyl-AMP cyclohydrolase (Bacillus cereus (strain Q1)).